Consider the following 510-residue polypeptide: UDP-N-acetylmuramate--L-alanine ligase (510 aa).

Residues 1–25 (MVETVGGKDAVAPAPARSPSPPAKN) form a disordered region. Residue 140-146 (GTHGKTT) coordinates ATP.

The protein belongs to the MurCDEF family.

The protein resides in the cytoplasm. It carries out the reaction UDP-N-acetyl-alpha-D-muramate + L-alanine + ATP = UDP-N-acetyl-alpha-D-muramoyl-L-alanine + ADP + phosphate + H(+). Its pathway is cell wall biogenesis; peptidoglycan biosynthesis. Cell wall formation. In Synechococcus sp. (strain JA-3-3Ab) (Cyanobacteria bacterium Yellowstone A-Prime), this protein is UDP-N-acetylmuramate--L-alanine ligase.